The sequence spans 442 residues: Histidine--tRNA ligase (442 aa).

It belongs to the class-II aminoacyl-tRNA synthetase family. In terms of assembly, homodimer.

It is found in the cytoplasm. The catalysed reaction is tRNA(His) + L-histidine + ATP = L-histidyl-tRNA(His) + AMP + diphosphate + H(+). The chain is Histidine--tRNA ligase from Psychrobacter arcticus (strain DSM 17307 / VKM B-2377 / 273-4).